A 307-amino-acid polypeptide reads, in one-letter code: Elongation factor Ts (307 aa).

An involved in Mg(2+) ion dislocation from EF-Tu region spans residues 80 to 83 (TDFV).

Belongs to the EF-Ts family.

The protein localises to the cytoplasm. Associates with the EF-Tu.GDP complex and induces the exchange of GDP to GTP. It remains bound to the aminoacyl-tRNA.EF-Tu.GTP complex up to the GTP hydrolysis stage on the ribosome. In Variovorax paradoxus (strain S110), this protein is Elongation factor Ts.